We begin with the raw amino-acid sequence, 240 residues long: MADS-box protein SVP (240 aa).

The region spanning 3-57 is the MADS-box domain; sequence REKIQIRKIDNATARQVTFSKRRRGLFKKAEELSVLCDADVALIIFSSTGKLFEF. In terms of domain architecture, K-box spans 87–180; it reads QLVENSDHAR…GTQLTEENER (94 aa). The interval 202 to 240 is disordered; it reads VYEEGQSSESITNAGNSTGAPVDSESSDTSLRLGLPYGG. Positions 206–220 are enriched in polar residues; the sequence is GQSSESITNAGNSTG.

In terms of assembly, forms a heterodimer with AP1 and SVP. Interacts with the SEU-LUG corepressor complex when complexed to AP1. Interacts with AGL15. Interacts with AGL16. As to expression, detected in roots and leaves. Expressed at very low levels in flowers and siliques. Present in floral meristems.

It localises to the nucleus. Functionally, transcription repressor that inhibit floral transition in the autonomous flowering pathway, independent of photoperiod and temperature. Acts in a dosage-dependent manner. Together with AGL24 and AP1, controls the identity of the floral meristem and regulates expression of class B, C and E genes. Promotes EFM expression to suppress flowering. The protein is MADS-box protein SVP of Arabidopsis thaliana (Mouse-ear cress).